Here is a 119-residue protein sequence, read N- to C-terminus: Protein yippee-like 1 (119 aa).

The region spanning R19–N116 is the Yippee domain. Zn(2+)-binding residues include C23, C26, C79, and C82. The Nuclear localization signal motif lies at K99–K104.

This sequence belongs to the yippee family.

It localises to the nucleus. Functionally, may play a role in epithelioid conversion of fibroblasts. The sequence is that of Protein yippee-like 1 (YPEL1) from Chlorocebus aethiops (Green monkey).